Here is a 463-residue protein sequence, read N- to C-terminus: Vacuolar cation/proton exchanger 1 (463 aa).

A2 bears the N-acetylalanine mark. Residues A2–E68 lie on the Cytoplasmic side of the membrane. The segment at S25–T33 is required for autoinhibitory regulation. The segment at Y56–F62 is required for interaction with autoinhibitory region. The chain crosses the membrane as a helical span at residues V69–T89. The required for Ca(2+)/H(+) exchange activity stretch occupies residues I87–Q95. The Extracellular portion of the chain corresponds to Y90–P96. Residues W97–L116 traverse the membrane as a helical segment. Over T117–T127 the chain is Cytoplasmic. Residues L128–A148 traverse the membrane as a helical segment. Residues G137–V172 form a cation selection region. The Extracellular portion of the chain corresponds to L149–L161. Residues L162–I182 form a helical membrane-spanning segment. Topologically, residues A183 to D197 are cytoplasmic. A helical membrane pass occupies residues V198–Y218. The Extracellular segment spans residues L219–R238. The chain crosses the membrane as a helical span at residues G239 to H259. Over R260–A281 the chain is Cytoplasmic. A helical membrane pass occupies residues V282–L302. Residues S303–S325 are Extracellular-facing. N-linked (GlcNAc...) asparagine glycosylation occurs at N318. A helical transmembrane segment spans residues I326 to F346. Residues G333 to V368 are cation selection. The Cytoplasmic segment spans residues K347–S360. Residues A361–I381 traverse the membrane as a helical segment. Residues N382 to D384 are Extracellular-facing. The helical transmembrane segment at L385–T405 threads the bilayer. The Cytoplasmic portion of the chain corresponds to L406–S411. A helical transmembrane segment spans residues H412 to V432. Residues D433 to S463 are Extracellular-facing.

This sequence belongs to the Ca(2+):cation antiporter (CaCA) (TC 2.A.19) family. Cation/proton exchanger (CAX) subfamily. As to quaternary structure, interacts with GRXS14 and CXIP4. Expressed at low levels in leaves, stems and flowers.

Its subcellular location is the vacuole membrane. Activated by monothiol glutaredoxin GRXS14 and CXIP4. Inhibited by excess of Ca(2+) and Cd(2+), Na(+) and K(+), but not Mn(2+). In terms of biological role, vacuolar cation/proton exchanger (CAX). Translocates Ca(2+) and other metal ions into vacuoles using the proton gradient formed by H(+)-ATPase and H(+)-pyrophosphatase. Involved in ion homeostasis in association with CAX3. May play a role in cold-acclimation response. The chain is Vacuolar cation/proton exchanger 1 (CAX1) from Arabidopsis thaliana (Mouse-ear cress).